A 613-amino-acid polypeptide reads, in one-letter code: Methionine--tRNA ligase (613 aa).

The short motif at 15–25 (PYANGPRHIGH) is the 'HIGH' region element. 4 residues coordinate Zn(2+): cysteine 147, cysteine 150, cysteine 160, and cysteine 163. The short motif at 351–355 (KFSSS) is the 'KMSKS' region element. ATP is bound at residue serine 354.

The protein belongs to the class-I aminoacyl-tRNA synthetase family. MetG type 1 subfamily. In terms of assembly, monomer. The cofactor is Zn(2+).

It localises to the cytoplasm. It catalyses the reaction tRNA(Met) + L-methionine + ATP = L-methionyl-tRNA(Met) + AMP + diphosphate. In terms of biological role, is required not only for elongation of protein synthesis but also for the initiation of all mRNA translation through initiator tRNA(fMet) aminoacylation. The polypeptide is Methionine--tRNA ligase (Corynebacterium efficiens (strain DSM 44549 / YS-314 / AJ 12310 / JCM 11189 / NBRC 100395)).